We begin with the raw amino-acid sequence, 554 residues long: Dihydroxy-acid dehydratase (554 aa).

Mg(2+) is bound at residue Asp78. Residue Cys119 coordinates [2Fe-2S] cluster. Mg(2+) is bound by residues Asp120 and Lys121. Lys121 carries the post-translational modification N6-carboxylysine. Residue Cys191 coordinates [2Fe-2S] cluster. Residue Glu442 participates in Mg(2+) binding. Ser468 acts as the Proton acceptor in catalysis.

It belongs to the IlvD/Edd family. Homodimer. Requires [2Fe-2S] cluster as cofactor. Mg(2+) serves as cofactor.

The catalysed reaction is (2R)-2,3-dihydroxy-3-methylbutanoate = 3-methyl-2-oxobutanoate + H2O. It catalyses the reaction (2R,3R)-2,3-dihydroxy-3-methylpentanoate = (S)-3-methyl-2-oxopentanoate + H2O. It functions in the pathway amino-acid biosynthesis; L-isoleucine biosynthesis; L-isoleucine from 2-oxobutanoate: step 3/4. It participates in amino-acid biosynthesis; L-valine biosynthesis; L-valine from pyruvate: step 3/4. Functions in the biosynthesis of branched-chain amino acids. Catalyzes the dehydration of (2R,3R)-2,3-dihydroxy-3-methylpentanoate (2,3-dihydroxy-3-methylvalerate) into 2-oxo-3-methylpentanoate (2-oxo-3-methylvalerate) and of (2R)-2,3-dihydroxy-3-methylbutanoate (2,3-dihydroxyisovalerate) into 2-oxo-3-methylbutanoate (2-oxoisovalerate), the penultimate precursor to L-isoleucine and L-valine, respectively. The protein is Dihydroxy-acid dehydratase of Hydrogenobaculum sp. (strain Y04AAS1).